Reading from the N-terminus, the 397-residue chain is Myb family transcription factor PHL4 (397 aa).

The disordered stretch occupies residues 1–27 (MIPNDDDDANSMKNYPLNDDDANSMKN). The region spanning 228 to 288 (AAAKGRMRWT…HLQKYRTAKY (61 aa)) is the HTH myb-type domain. A DNA-binding region (H-T-H motif) is located at residues 259 to 284 (PKGVLKHMKVEGLTIFHVKSHLQKYR). The coiled coil stretch occupies residues 319-339 (TETLRIQMEHQKKLHEQLESL). The short motif at 332–337 (LHEQLE) is the LHEQLE element. The interval 359-397 (KQNMGFGGPEQGEKTSAKTPENGSEESESPRPKRPRNEE) is disordered. The span at 386–397 (ESPRPKRPRNEE) shows a compositional bias: basic and acidic residues. Ser-387 carries the post-translational modification Phosphoserine.

The protein belongs to the MYB-CC family.

The protein resides in the nucleus. Transcription factor involved in male gametophyte development. The sequence is that of Myb family transcription factor PHL4 from Arabidopsis thaliana (Mouse-ear cress).